The following is an 879-amino-acid chain: MQNTSCTEDRIQHALERCLHGLSGSTDISSNWTAGLCLNYWSLEELVNRDATNYIILAEKTLARTREAQKNGEYELLTPLALMFYFAVLRAPYIPETSDLLPKAFEVFHTFLTWPAPYCHVYQEMLSFISEEQKAPGITYQRLVRTEQGIPTRSSCSSTATVLLVNPAELPSEFLSVAEQLSNAEQPIQQTLVSLIQHLFQASLGTHAHTEELGASLKSRPIEKLQEIYSDLTEAMEHATMADIKPGKKRESLKAKLLEVAEKAGLMQGNTGSSLTSRIQPIFMPVAKCYTYSWDQDDFDILNQILLSESHLESLEDDVTEEDEEVDFEEVDDKDEDGGKSPKQDSVFSNSYVYWNFPSDSKEDPSMSMSNLASHSMTFVSSLSSCVDSGYVEDSDEGSQEISEIGEYQEERANNKLKQKICQLFKTKGHQAKDKLKAELSPCISHPLLSPFPDISKTIPLRRAGSMYTPQLSRIPVRSKRSKSLPQPAFGTQFLDLQLSQKVAFKRRPFLSCDDDTKVSTLRIVVFGSDRISGKVARAYSNLRLKESSCPLLTRFFKLQFYYIPVKRSSSSTNAPMTNAESPLKSPSPSGRFPLQDVFGDEASTNDISHYIGILDPWYKRNIMGLMDLSTSMLCQSSKEENETTETTTMPILADMVLYYCRFATRSLLLQLYRAEITFDSGGKQTEVFIQCLELGHSADLRAIRASGPGCKRLGIDGDQDVIPFTLQIVYSKSTVSGRSRWSNGEKVCTSVSLRKACNTYEELDSKMECLNLTVREVVKRQNSKTKKSFNQICTSHIKIDKAQIIAQHGGTFPLCLDQDERKILQRVIKCEVSPCYKPEDRDFCRRNRRPSWSQASQNQSEFCSLLCLPIATFCGAQP.

Residues 23–100 (SGSTDISSNW…APYIPETSDL (78 aa)) form a heterodimerization region. 2 disordered regions span residues 314–345 (SLEDDVTEEDEEVDFEEVDDKDEDGGKSPKQD) and 570–590 (SSSTNAPMTNAESPLKSPSPS). Positions 315-336 (LEDDVTEEDEEVDFEEVDDKDE) are enriched in acidic residues. Over residues 570 to 589 (SSSTNAPMTNAESPLKSPSP) the composition is skewed to polar residues. The tract at residues 651 to 751 (PILADMVLYY…WSNGEKVCTS (101 aa)) is interaction with beta-gamma G protein dimers.

As to quaternary structure, heterodimer. Interacts with a catalytic subunit and with beta-gamma G protein dimers.

The protein localises to the nucleus. Its subcellular location is the cytoplasm. It is found in the cell membrane. Greatly activated by G gamma proteins. Regulatory subunit of the PI3K gamma complex. Required for recruitment of the catalytic subunit to the plasma membrane via interaction with beta-gamma G protein dimers. Required for G protein-mediated activation of PIK3CG. The protein is Phosphoinositide 3-kinase regulatory subunit 5 (pik3r5) of Xenopus laevis (African clawed frog).